We begin with the raw amino-acid sequence, 485 residues long: MKKQPQKTLLAIALSVVSGTAMSHGYVSAVENGVAEARVTLCKFAASTGEKNTNCGAIQYEPQSVEGPDGFPASGPRDGKIASAESALANALDEQTADRWVKRPIQAGAQNFEWTFTANHVTKDWKYYITKPDWNPNQPLARASFDLTPFCVVDGGMVQPPKRVSHTCNVPEREGYQVILAVWDVGDTAASFYNVIDVKFDGDGPALPDWQQGGQIIPTMNLNVGDTVFTRVFDLAGENPAYTTELAIDSDALTVANNWSHALAVKINQTQSEIAAGQLNEQNQFVPVYGTNPIFLKSGSNLQRVEIGYKIETPAPEYDVTLSGLASEYQIGDAPVTLDLGLQATGDITTELTIYNHHKEPLAFETVAMTDGENKAVSMTLSKSEAGHHMLVTKVLDKDGTLQKQQTSDFMLTETQTPPPSDDYDFVFPDGLSSYTADTKVLASDGAIYQCKPFPYSGYCVQWTPTATQYQPGTGSHWQMAWDKL.

Residues 1-29 (MKKQPQKTLLAIALSVVSGTAMSHGYVSA) form the signal peptide. The Chitin-binding type-4 domain maps to 30–200 (VENGVAEARV…SFYNVIDVKF (171 aa)). The region spanning 437-478 (ADTKVLASDGAIYQCKPFPYSGYCVQWTPTATQYQPGTGSHW) is the Chitin-binding type-3 domain.

It belongs to the GbpA family.

Its subcellular location is the secreted. Its function is as follows. Probably interacts with GlcNAc residues. May promote attachment to both epithelial cell surfaces and chitin. The sequence is that of GlcNAc-binding protein A from Vibrio vulnificus (strain CMCP6).